Consider the following 354-residue polypeptide: 2-methylisoborneol synthase (354 aa).

The segment at 1-29 (MIELIGHETPVPSQQQHTGGVRGTSACTP) is disordered. Positions 113, 114, 118, 264, 268, and 272 each coordinate Mg(2+).

The protein belongs to the terpene synthase family. 2-methylisoborneol synthase subfamily. Mg(2+) serves as cofactor.

It catalyses the reaction (E)-2-methylgeranyl diphosphate + H2O = 2-methylisoborneol + diphosphate. Catalyzes the cyclization of 2-methylgeranyl diphosphate (2-MeGPP) to 2-methylisoborneol (2-MIB), which likely involves the intermediacy of 2-methyllinalyl diphosphate. This is 2-methylisoborneol synthase from Saccharopolyspora erythraea (strain ATCC 11635 / DSM 40517 / JCM 4748 / NBRC 13426 / NCIMB 8594 / NRRL 2338).